The following is a 171-amino-acid chain: Adenine phosphoribosyltransferase (171 aa).

It belongs to the purine/pyrimidine phosphoribosyltransferase family. As to quaternary structure, homodimer.

Its subcellular location is the cytoplasm. The catalysed reaction is AMP + diphosphate = 5-phospho-alpha-D-ribose 1-diphosphate + adenine. Its pathway is purine metabolism; AMP biosynthesis via salvage pathway; AMP from adenine: step 1/1. Functionally, catalyzes a salvage reaction resulting in the formation of AMP, that is energically less costly than de novo synthesis. This Syntrophotalea carbinolica (strain DSM 2380 / NBRC 103641 / GraBd1) (Pelobacter carbinolicus) protein is Adenine phosphoribosyltransferase.